A 331-amino-acid polypeptide reads, in one-letter code: Phosphoribosylformylglycinamidine cyclo-ligase (331 aa).

The protein belongs to the AIR synthase family.

It is found in the cytoplasm. It catalyses the reaction 2-formamido-N(1)-(5-O-phospho-beta-D-ribosyl)acetamidine + ATP = 5-amino-1-(5-phospho-beta-D-ribosyl)imidazole + ADP + phosphate + H(+). Its pathway is purine metabolism; IMP biosynthesis via de novo pathway; 5-amino-1-(5-phospho-D-ribosyl)imidazole from N(2)-formyl-N(1)-(5-phospho-D-ribosyl)glycinamide: step 2/2. In Clostridium botulinum (strain Okra / Type B1), this protein is Phosphoribosylformylglycinamidine cyclo-ligase.